The following is a 57-amino-acid chain: UPF0391 membrane protein RPD_3366 (57 aa).

Helical transmembrane passes span 4–24 (WVVTFLVVALIAGILGFGGIA) and 30–50 (IAKVIFFIAVVLFLISAVVGL).

This sequence belongs to the UPF0391 family.

The protein resides in the cell membrane. The protein is UPF0391 membrane protein RPD_3366 of Rhodopseudomonas palustris (strain BisB5).